Here is a 439-residue protein sequence, read N- to C-terminus: 26S rRNA (cytosine-C(5))-methyltransferase nsun-5 (439 aa).

Residues aspartate 266, aspartate 293, and aspartate 313 each coordinate S-adenosyl-L-methionine. Catalysis depends on cysteine 366, which acts as the Nucleophile.

This sequence belongs to the class I-like SAM-binding methyltransferase superfamily. RsmB/NOP family.

The catalysed reaction is a cytidine in 26S rRNA + S-adenosyl-L-methionine = a 5-methylcytidine in 26S rRNA + S-adenosyl-L-homocysteine + H(+). Functionally, S-adenosyl-L-methionine-dependent methyltransferase which methylates the carbon-5 position of cytosine 2381 to 5-methylcytosine (m5C2381) in 26S rRNA. Plays a role in the production of mature 5S, 5.8S, 18S and 26S rRNAs and promotes the processing of the internally transcribed spacer 2 (ITS2), which separates the 5.8S and 26S rRNAs on large pre-rRNA precursors. May play a role in the translation of leucine and proline codons. May play a role in maintaining ribosomal frameshifting in response to osmotic stress. Not required for global translation. This Caenorhabditis elegans protein is 26S rRNA (cytosine-C(5))-methyltransferase nsun-5.